The chain runs to 549 residues: Cation/acetate symporter ActP (549 aa).

The next 13 membrane-spanning stretches (helical) occupy residues 33–53, 77–97, 103–123, 148–168, 183–203, 206–226, 262–282, 303–323, 355–375, 404–424, 428–448, 464–484, and 493–513; these read WQAI…TYWA, LAIA…ALVF, GLIY…LIAE, ILSA…QMVG, IAVV…GMLA, WVQI…AFMV, ISAL…PHIL, GFMG…IMLV, LFLG…VAGL, VSKI…VLFE, IAFM…PIIL, GGWL…TIWV, and IFPY…GIWF.

The protein belongs to the sodium:solute symporter (SSF) (TC 2.A.21) family.

The protein localises to the cell inner membrane. In terms of biological role, transports acetate. The polypeptide is Cation/acetate symporter ActP (Escherichia coli O6:K15:H31 (strain 536 / UPEC)).